The following is a 70-amino-acid chain: DNA-directed RNA polymerase subunit omega (70 aa).

It belongs to the RNA polymerase subunit omega family. As to quaternary structure, the RNAP catalytic core consists of 2 alpha, 1 beta, 1 beta' and 1 omega subunit. When a sigma factor is associated with the core the holoenzyme is formed, which can initiate transcription.

The enzyme catalyses RNA(n) + a ribonucleoside 5'-triphosphate = RNA(n+1) + diphosphate. Its function is as follows. Promotes RNA polymerase assembly. Latches the N- and C-terminal regions of the beta' subunit thereby facilitating its interaction with the beta and alpha subunits. This Methylobacillus flagellatus (strain ATCC 51484 / DSM 6875 / VKM B-1610 / KT) protein is DNA-directed RNA polymerase subunit omega.